The sequence spans 500 residues: Aspartyl/glutamyl-tRNA(Asn/Gln) amidotransferase subunit B (500 aa).

This sequence belongs to the GatB/GatE family. GatB subfamily. In terms of assembly, heterotrimer of A, B and C subunits.

It carries out the reaction L-glutamyl-tRNA(Gln) + L-glutamine + ATP + H2O = L-glutaminyl-tRNA(Gln) + L-glutamate + ADP + phosphate + H(+). It catalyses the reaction L-aspartyl-tRNA(Asn) + L-glutamine + ATP + H2O = L-asparaginyl-tRNA(Asn) + L-glutamate + ADP + phosphate + 2 H(+). Functionally, allows the formation of correctly charged Asn-tRNA(Asn) or Gln-tRNA(Gln) through the transamidation of misacylated Asp-tRNA(Asn) or Glu-tRNA(Gln) in organisms which lack either or both of asparaginyl-tRNA or glutaminyl-tRNA synthetases. The reaction takes place in the presence of glutamine and ATP through an activated phospho-Asp-tRNA(Asn) or phospho-Glu-tRNA(Gln). The protein is Aspartyl/glutamyl-tRNA(Asn/Gln) amidotransferase subunit B of Sinorhizobium fredii (strain NBRC 101917 / NGR234).